A 425-amino-acid polypeptide reads, in one-letter code: SRRM2 protein homolog rsr-2 (425 aa).

Residues 57 to 100 (MDHNRKRQIEVKCTEFEMLLEDKGLDDEDIERKVGEYRKNLLKQ) enclose the CWF21 domain. Disordered stretches follow at residues 109 to 131 (DEEL…RDKM) and 161 to 425 (ESEL…SDSE). A compositionally biased stretch (basic and acidic residues) spans 164 to 178 (LPQKDDKEKLLETLR). The segment covering 189–202 (SSSSSSSSSSSSES) has biased composition (low complexity). The segment covering 210–221 (RKDRKKKEKKQK) has biased composition (basic residues). 2 stretches are compositionally biased toward basic and acidic residues: residues 222–251 (LKEM…KEEP) and 259–305 (DSRK…EDRT). Positions 306–317 (VRRRSPERRRQQ) are enriched in basic residues. 3 stretches are compositionally biased toward basic and acidic residues: residues 321–332 (SVERRKSPQRRD), 355–366 (SRMDELEVKQEP), and 383–398 (RVEK…RKSS). Positions 399–425 (SESSSGSSDSDSSSDSSSSSDSSSDSE) are enriched in low complexity.

The protein belongs to the CWC21 family. As to quaternary structure, interacts with RNA polymerase II subunit ama-1, binding to both hyperphosphorylated and hypophosphorylated forms, but more strongly when ama-1 is phosphorylated at 'Ser-5' of the C-terminal heptapeptide repeat. Interacts with pre-mRNA-processing factor prp-19. May also interact with pre-mRNA-splicing factor 8 homolog prp-8. Expressed in the proximal germline, but not in the most distal part where mitosis takes place. May be expressed ubiquitously in somatic cells.

It localises to the nucleus. The protein resides in the chromosome. It is found in the nuclear body. Its function is as follows. Plays a role in pre-mRNA splicing as component of the spliceosome. Involved in modulating global transcription, probably acting via interaction with RNA polymerase II. Influences the chromatin distribution and phosphorylation state of RNA polymerase II subunit ama-1. Involved in regulating the germline sex determination pathway. This Caenorhabditis elegans protein is SRRM2 protein homolog rsr-2.